The primary structure comprises 317 residues: Ferrochelatase (317 aa).

Fe cation contacts are provided by His192 and Glu271.

This sequence belongs to the ferrochelatase family.

The protein resides in the cytoplasm. The enzyme catalyses heme b + 2 H(+) = protoporphyrin IX + Fe(2+). Its pathway is porphyrin-containing compound metabolism; protoheme biosynthesis; protoheme from protoporphyrin-IX: step 1/1. Functionally, catalyzes the ferrous insertion into protoporphyrin IX. This chain is Ferrochelatase, found in Geobacter sp. (strain M21).